Reading from the N-terminus, the 213-residue chain is MSRLIIAFIVVTMVCSAIALPKKKVEPLEKDEKRSLAVAGAVIEGGNLVMSVLDRILEAIGDVNRKIAIGVENQSGKSWTAMNTYFRSGTSDVVLPHSVPSGKALLYDGQKTRGPVATGVVGVFAYAMSDGNTLAVMFSIPYDYNLYSNWWNVKTYSGMKRADQSMYEDLYYHASPFKGDNGWHSRNLGYGLKCRGFMNSSGAAKLEIHVSRA.

The signal sequence occupies residues 1–19 (MSRLIIAFIVVTMVCSAIA). Residues 20 to 34 (LPKKKVEPLEKDEKR) constitute a propeptide that is removed on maturation. The segment at 37–46 (AVAGAVIEGG) is plays an important role in the hemolytic activity. An N-terminal region region spans residues 45 to 64 (GGNLVMSVLDRILEAIGDVN). 7 residues coordinate phosphocholine: serine 88, valine 121, serine 139, proline 141, tyrosine 167, tyrosine 171, and tyrosine 172. Positions 139-154 (SIPYDYNLYSNWWNVK) are trp-rich region, which is important for the binding to lipid membrane. A Cell attachment site, crucial for protein stability motif is present at residues 178–180 (KGD).

Belongs to the actinoporin family. Sea anemone subfamily. Octamer or nonamer in membranes. Monomer in the soluble state.

The protein resides in the secreted. It localises to the nematocyst. It is found in the target cell membrane. Functionally, pore-forming protein that forms cation-selective hydrophilic pores of around 1 nm and causes cytolysis. Pore formation is a multi-step process that involves specific recognition of membrane sphingomyelin (but neither cholesterol nor phosphatidylcholine) using aromatic rich region and adjacent phosphocholine (POC) binding site, firm binding to the membrane (mainly driven by hydrophobic interactions) accompanied by the transfer of the N-terminal region to the lipid-water interface and finally pore formation after oligomerization of monomers. This protein shows potent hemolytic activity (EC(50)=8.8 ng/ml) that is specifically inhibited by sphingomyelin. Shows no phospholipase A2 activity, nor antimicrobial activity against the four bacteria tested. Is lethal to crayfish. In Anthopleura asiatica (Sea anemone), this protein is DELTA-actitoxin-Aas1a.